A 276-amino-acid polypeptide reads, in one-letter code: Light-independent protochlorophyllide reductase iron-sulfur ATP-binding protein (276 aa).

Residues 12–17 and lysine 41 contribute to the ATP site; that span reads GIGKST. Serine 16 contributes to the Mg(2+) binding site. The [4Fe-4S] cluster site is built by cysteine 97 and cysteine 131. 182–183 provides a ligand contact to ATP; sequence NR.

The protein belongs to the NifH/BchL/ChlL family. In terms of assembly, homodimer. Protochlorophyllide reductase is composed of three subunits; BchL, BchN and BchB. Requires [4Fe-4S] cluster as cofactor.

The enzyme catalyses chlorophyllide a + oxidized 2[4Fe-4S]-[ferredoxin] + 2 ADP + 2 phosphate = protochlorophyllide a + reduced 2[4Fe-4S]-[ferredoxin] + 2 ATP + 2 H2O. It functions in the pathway porphyrin-containing compound metabolism; bacteriochlorophyll biosynthesis (light-independent). In terms of biological role, component of the dark-operative protochlorophyllide reductase (DPOR) that uses Mg-ATP and reduced ferredoxin to reduce ring D of protochlorophyllide (Pchlide) to form chlorophyllide a (Chlide). This reaction is light-independent. The L component serves as a unique electron donor to the NB-component of the complex, and binds Mg-ATP. This is Light-independent protochlorophyllide reductase iron-sulfur ATP-binding protein from Chlorobaculum tepidum (strain ATCC 49652 / DSM 12025 / NBRC 103806 / TLS) (Chlorobium tepidum).